The following is a 318-amino-acid chain: Deacetoxycephalosporin C hydroxylase (318 aa).

The 114-residue stretch at 158–271 (DADPVLRLRY…RTSSVFFLRP (114 aa)) folds into the Fe2OG dioxygenase domain.

Belongs to the iron/ascorbate-dependent oxidoreductase family. As to quaternary structure, monomer. Fe cation is required as a cofactor.

The enzyme catalyses deacetoxycephalosporin C + 2-oxoglutarate + O2 = deacetylcephalosporin C + succinate + CO2. It participates in antibiotic biosynthesis; cephalosporin C biosynthesis. Hydroxylation of desacetoxicephalosporin C in 3'position to form deacetylcephalosporin C. The protein is Deacetoxycephalosporin C hydroxylase (cefF) of Streptomyces clavuligerus.